The primary structure comprises 191 residues: NADH-quinone oxidoreductase subunit B (191 aa).

[4Fe-4S] cluster-binding residues include C70, C71, C135, and C165.

It belongs to the complex I 20 kDa subunit family. As to quaternary structure, NDH-1 is composed of 14 different subunits. Subunits NuoB, C, D, E, F, and G constitute the peripheral sector of the complex. Requires [4Fe-4S] cluster as cofactor.

It localises to the cell inner membrane. The catalysed reaction is a quinone + NADH + 5 H(+)(in) = a quinol + NAD(+) + 4 H(+)(out). NDH-1 shuttles electrons from NADH, via FMN and iron-sulfur (Fe-S) centers, to quinones in the respiratory chain. The immediate electron acceptor for the enzyme in this species is believed to be ubiquinone. Couples the redox reaction to proton translocation (for every two electrons transferred, four hydrogen ions are translocated across the cytoplasmic membrane), and thus conserves the redox energy in a proton gradient. This is NADH-quinone oxidoreductase subunit B from Parvibaculum lavamentivorans (strain DS-1 / DSM 13023 / NCIMB 13966).